A 459-amino-acid polypeptide reads, in one-letter code: Cysteine--tRNA ligase (459 aa).

Position 28 (cysteine 28) interacts with Zn(2+). Residues valine 30–histidine 40 carry the 'HIGH' region motif. Zn(2+)-binding residues include cysteine 209, histidine 234, and glutamate 238. The 'KMSKS' region motif lies at lysine 266–serine 270. Position 269 (lysine 269) interacts with ATP.

Belongs to the class-I aminoacyl-tRNA synthetase family. In terms of assembly, monomer. It depends on Zn(2+) as a cofactor.

The protein localises to the cytoplasm. It catalyses the reaction tRNA(Cys) + L-cysteine + ATP = L-cysteinyl-tRNA(Cys) + AMP + diphosphate. This is Cysteine--tRNA ligase from Shewanella oneidensis (strain ATCC 700550 / JCM 31522 / CIP 106686 / LMG 19005 / NCIMB 14063 / MR-1).